The primary structure comprises 131 residues: Profilin-3 (131 aa).

Belongs to the profilin family. In terms of assembly, occurs in many kinds of cells as a complex with monomeric actin in a 1:1 ratio.

It localises to the cytoplasm. The protein localises to the cytoskeleton. In terms of biological role, binds to actin and affects the structure of the cytoskeleton. At high concentrations, profilin prevents the polymerization of actin, whereas it enhances it at low concentrations. By binding to PIP2, it inhibits the formation of IP3 and DG. This is Profilin-3 from Lilium longiflorum (Trumpet lily).